The primary structure comprises 199 residues: Charged multivesicular body protein 1b (199 aa).

The stretch at 26-48 (DKEEKAEKAKIKKAIQKGNMEVA) forms a coiled coil. An interaction with IST1 region spans residues 132–156 (MEDTMSSTTTLTTPQNQVDMLLQEM). Residues 167–199 (ELPQGQTGSVGTSVASAEQDELSQRLARLRDQV) are disordered. The segment covering 170–182 (QGQTGSVGTSVAS) has biased composition (polar residues). The interval 174–199 (GSVGTSVASAEQDELSQRLARLRDQV) is interaction with SPAST. A coiled-coil region spans residues 178–199 (TSVASAEQDELSQRLARLRDQV). The interaction with VPS4A, MITD1 and STAMBP stretch occupies residues 180–196 (VASAEQDELSQRLARLR). Residues 180–199 (VASAEQDELSQRLARLRDQV) are interaction with VTA1. The tract at residues 183–199 (AEQDELSQRLARLRDQV) is interaction with VPS4B. An MIT-interacting motif motif is present at residues 186-196 (DELSQRLARLR).

The protein belongs to the SNF7 family. Probable peripherally associated component of the endosomal sorting required for transport complex III (ESCRT-III). ESCRT-III components are thought to multimerize to form a flat lattice on the perimeter membrane of the endosome. Several assembly forms of ESCRT-III may exist that interact and act sequentially. Interacts with CHMP1A. Interacts with VTA1; the interaction probably involves the open conformation of CHMP1B. Interacts with CHMP2A. Interacts with VPS4A; the interaction is direct. Interacts with VPS4B; the interaction is direct. Interacts with SPAST (via MIT domain); the interaction is direct. Interacts with IST1. Interacts with MITD1. Interacts with STAMBP. In terms of tissue distribution, widely expressed. Expressed in pancreas, kidney, skeletal muscle, liver, lung, placenta and brain.

It is found in the cytoplasm. The protein localises to the cytosol. Its subcellular location is the endosome. The protein resides in the late endosome membrane. In terms of biological role, probable peripherally associated component of the endosomal sorting required for transport complex III (ESCRT-III) which is involved in multivesicular bodies (MVBs) formation and sorting of endosomal cargo proteins into MVBs. MVBs contain intraluminal vesicles (ILVs) that are generated by invagination and scission from the limiting membrane of the endosome and mostly are delivered to lysosomes enabling degradation of membrane proteins, such as stimulated growth factor receptors, lysosomal enzymes and lipids. The MVB pathway appears to require the sequential function of ESCRT-O, -I,-II and -III complexes. ESCRT-III proteins mostly dissociate from the invaginating membrane before the ILV is released. The ESCRT machinery also functions in topologically equivalent membrane fission events, such as the terminal stages of cytokinesis and the budding of enveloped viruses (HIV-1 and other lentiviruses). ESCRT-III proteins are believed to mediate the necessary vesicle extrusion and/or membrane fission activities, possibly in conjunction with the AAA ATPase VPS4. Involved in cytokinesis. Involved in recruiting VPS4A and/or VPS4B and SPAST to the midbody of dividing cells. Involved in HIV-1 p6- and p9-dependent virus release. The sequence is that of Charged multivesicular body protein 1b (CHMP1B) from Homo sapiens (Human).